The sequence spans 881 residues: Alanine--tRNA ligase (881 aa).

It belongs to the class-II aminoacyl-tRNA synthetase family.

Its subcellular location is the cytoplasm. The catalysed reaction is tRNA(Ala) + L-alanine + ATP = L-alanyl-tRNA(Ala) + AMP + diphosphate. In terms of biological role, catalyzes the attachment of alanine to tRNA(Ala) in a two-step reaction: alanine is first activated by ATP to form Ala-AMP and then transferred to the acceptor end of tRNA(Ala). Also edits incorrectly charged Ser-tRNA(Ala) and Gly-tRNA(Ala) via its editing domain. This chain is Alanine--tRNA ligase (alaS), found in Lacticaseibacillus paracasei (strain ATCC 334 / BCRC 17002 / CCUG 31169 / CIP 107868 / KCTC 3260 / NRRL B-441) (Lactobacillus paracasei).